Reading from the N-terminus, the 98-residue chain is NADH-ubiquinone oxidoreductase chain 4L (98 aa).

The next 3 helical transmembrane spans lie at Met1–Val21, Ser29–Leu49, and Ile61–Val81.

It belongs to the complex I subunit 4L family. Core subunit of respiratory chain NADH dehydrogenase (Complex I) which is composed of 45 different subunits.

The protein resides in the mitochondrion inner membrane. The catalysed reaction is a ubiquinone + NADH + 5 H(+)(in) = a ubiquinol + NAD(+) + 4 H(+)(out). Core subunit of the mitochondrial membrane respiratory chain NADH dehydrogenase (Complex I) which catalyzes electron transfer from NADH through the respiratory chain, using ubiquinone as an electron acceptor. Part of the enzyme membrane arm which is embedded in the lipid bilayer and involved in proton translocation. This is NADH-ubiquinone oxidoreductase chain 4L (MT-ND4L) from Mephitis mephitis (Striped skunk).